The sequence spans 259 residues: 3-deoxy-manno-octulosonate cytidylyltransferase 1 (259 aa).

It belongs to the KdsB family.

It localises to the cytoplasm. It catalyses the reaction 3-deoxy-alpha-D-manno-oct-2-ulosonate + CTP = CMP-3-deoxy-beta-D-manno-octulosonate + diphosphate. It functions in the pathway nucleotide-sugar biosynthesis; CMP-3-deoxy-D-manno-octulosonate biosynthesis; CMP-3-deoxy-D-manno-octulosonate from 3-deoxy-D-manno-octulosonate and CTP: step 1/1. It participates in bacterial outer membrane biogenesis; lipopolysaccharide biosynthesis. Activates KDO (a required 8-carbon sugar) for incorporation into bacterial lipopolysaccharide in Gram-negative bacteria. The chain is 3-deoxy-manno-octulosonate cytidylyltransferase 1 from Hydrogenovibrio crunogenus (strain DSM 25203 / XCL-2) (Thiomicrospira crunogena).